Consider the following 174-residue polypeptide: ATP-dependent protease subunit HslV (174 aa).

Residue Thr-2 is part of the active site. Na(+) contacts are provided by Gly-157, Cys-160, and Thr-163.

Belongs to the peptidase T1B family. HslV subfamily. A double ring-shaped homohexamer of HslV is capped on each side by a ring-shaped HslU homohexamer. The assembly of the HslU/HslV complex is dependent on binding of ATP.

It is found in the cytoplasm. It catalyses the reaction ATP-dependent cleavage of peptide bonds with broad specificity.. Its activity is regulated as follows. Allosterically activated by HslU binding. Protease subunit of a proteasome-like degradation complex believed to be a general protein degrading machinery. The polypeptide is ATP-dependent protease subunit HslV (Yersinia pseudotuberculosis serotype I (strain IP32953)).